The primary structure comprises 790 residues: Cadherin-18 (790 aa).

The first 24 residues, Met1–Gly24, serve as a signal peptide directing secretion. A propeptide spanning residues Thr25–Arg53 is cleaved from the precursor. A glycan (N-linked (GlcNAc...) asparagine) is linked at Asn36. 5 consecutive Cadherin domains span residues Gly54 to Phe159, Thr160 to Phe268, Pro269 to Phe383, Ser384 to Pro486, and Glu487 to Ser608. At Gly54 to Ser608 the chain is on the extracellular side. The N-linked (GlcNAc...) asparagine glycan is linked to Asn255. 2 N-linked (GlcNAc...) asparagine glycosylation sites follow: Asn455 and Asn536. The chain crosses the membrane as a helical span at residues Ala609–Leu636. The Cytoplasmic portion of the chain corresponds to Arg637–Thr790. The residue at position 786 (Ser786) is a Phosphoserine.

It is found in the cell membrane. Its function is as follows. Cadherins are calcium-dependent cell adhesion proteins. They preferentially interact with themselves in a homophilic manner in connecting cells; cadherins may thus contribute to the sorting of heterogeneous cell types. This is Cadherin-18 (CDH18) from Homo sapiens (Human).